Here is a 129-residue protein sequence, read N- to C-terminus: Small ribosomal subunit protein uS11 (129 aa).

The protein belongs to the universal ribosomal protein uS11 family. As to quaternary structure, part of the 30S ribosomal subunit. Interacts with proteins S7 and S18. Binds to IF-3.

Its function is as follows. Located on the platform of the 30S subunit, it bridges several disparate RNA helices of the 16S rRNA. Forms part of the Shine-Dalgarno cleft in the 70S ribosome. In Caulobacter sp. (strain K31), this protein is Small ribosomal subunit protein uS11.